We begin with the raw amino-acid sequence, 835 residues long: Protein translocase subunit SecA (835 aa).

Residues Gln85, 103 to 107, and Asp492 each bind ATP; that span reads GEGKT. The Zn(2+) site is built by Cys819, Cys821, Cys830, and Cys831.

The protein belongs to the SecA family. Monomer and homodimer. Part of the essential Sec protein translocation apparatus which comprises SecA, SecYEG and auxiliary proteins SecDF. Other proteins may also be involved. Zn(2+) is required as a cofactor.

It is found in the cell membrane. The protein localises to the cytoplasm. It carries out the reaction ATP + H2O + cellular proteinSide 1 = ADP + phosphate + cellular proteinSide 2.. In terms of biological role, part of the Sec protein translocase complex. Interacts with the SecYEG preprotein conducting channel. Has a central role in coupling the hydrolysis of ATP to the transfer of proteins into and across the cell membrane, serving as an ATP-driven molecular motor driving the stepwise translocation of polypeptide chains across the membrane. This is Protein translocase subunit SecA from Clostridium botulinum (strain ATCC 19397 / Type A).